A 434-amino-acid chain; its full sequence is Methylenetetrahydrofolate--tRNA-(uracil-5-)-methyltransferase TrmFO (434 aa).

An FAD-binding site is contributed by 9-14 (GAGLAG).

Belongs to the MnmG family. TrmFO subfamily. FAD serves as cofactor.

It is found in the cytoplasm. It carries out the reaction uridine(54) in tRNA + (6R)-5,10-methylene-5,6,7,8-tetrahydrofolate + NADH + H(+) = 5-methyluridine(54) in tRNA + (6S)-5,6,7,8-tetrahydrofolate + NAD(+). The enzyme catalyses uridine(54) in tRNA + (6R)-5,10-methylene-5,6,7,8-tetrahydrofolate + NADPH + H(+) = 5-methyluridine(54) in tRNA + (6S)-5,6,7,8-tetrahydrofolate + NADP(+). Catalyzes the folate-dependent formation of 5-methyl-uridine at position 54 (M-5-U54) in all tRNAs. The polypeptide is Methylenetetrahydrofolate--tRNA-(uracil-5-)-methyltransferase TrmFO (Listeria welshimeri serovar 6b (strain ATCC 35897 / DSM 20650 / CCUG 15529 / CIP 8149 / NCTC 11857 / SLCC 5334 / V8)).